The primary structure comprises 163 residues: Phosphopantetheine adenylyltransferase (163 aa).

Ser9 serves as a coordination point for substrate. Residues 9–10 (SF) and His17 each bind ATP. Residues Lys41, Ile75, and Arg89 each coordinate substrate. ATP contacts are provided by residues 90-92 (GIR), Glu100, and 125-131 (HLYVRSD).

This sequence belongs to the bacterial CoaD family. Homohexamer. It depends on Mg(2+) as a cofactor.

Its subcellular location is the cytoplasm. The enzyme catalyses (R)-4'-phosphopantetheine + ATP + H(+) = 3'-dephospho-CoA + diphosphate. The protein operates within cofactor biosynthesis; coenzyme A biosynthesis; CoA from (R)-pantothenate: step 4/5. Functionally, reversibly transfers an adenylyl group from ATP to 4'-phosphopantetheine, yielding dephospho-CoA (dPCoA) and pyrophosphate. This Borrelia garinii subsp. bavariensis (strain ATCC BAA-2496 / DSM 23469 / PBi) (Borreliella bavariensis) protein is Phosphopantetheine adenylyltransferase.